Here is a 393-residue protein sequence, read N- to C-terminus: MDALVEDDICILNHEKAHRRDPVTPVSIYSGDESVASHFALVTAYEDIKKRLKDSEKENSFLKKRIRILEEKLIGARKDEETSSVGREQVNKAYHAYREVCIDRDNLKSKLDKMNKDNSESLKVLNEQLQSKEVELLQLRTEVETQQVIRNLNPPSSNWEVEKLSCDLKIHGLEQELELLRKECRDLRIELQKAKQTDPSLDDNLNCRDLQRLSVSSDNMQSAYWELKREMSNLHLVTQVQAELLRKLKTPAAIKKACAPAGCMEDLGKDSTKLHLSNFTAAYKRHAPLSPNGKTLCHATPSPLPGDAKVLSEKAALQSWTDHERSIPHDGTNFQEHNSYSRNSLEDNSWVFPSPPKSSETTFGEMKSKPLPLPNLPPLHYLDQHNQNCHYKH.

The interval 1-198 (MDALVEDDIC…IELQKAKQTD (198 aa)) is homodimerization. Residues 40 to 198 (ALVTAYEDIK…IELQKAKQTD (159 aa)) are a coiled coil. Residues 217 to 258 (SDNMQSAYWELKREMSNLHLVTQVQAELLRKLKTPAAIKKAC) are interaction with TBK1 and IKBKE. A Phosphoserine modification is found at Ser-319. Disordered stretches follow at residues 321-340 (TDHE…HNSY) and 345-393 (LEDN…HYKH). The residue at position 354 (Ser-354) is a Phosphoserine. The span at 384-393 (QHNQNCHYKH) shows a compositional bias: polar residues.

In terms of assembly, homodimer. Interacts with IKBKE, TBK1 and TICAM1. Interacts with TAX1BP1. Interacts with CALCOCO2. Ubiquitinated via 'Lys-48'-linked polyubiquitination by TRIM38, leading to its degradation.

The protein resides in the cytoplasm. Adapter protein which binds TBK1 and IKBKE playing a role in antiviral innate immunity. Activates serine/threonine-protein kinase TBK1 and facilitates its oligomerization. Enhances the phosphorylation of NF-kappa-B p65 subunit RELA by TBK1. Promotes TBK1-induced as well as TNF-alpha or PMA-induced activation of NF-kappa-B. Participates in IFNB promoter activation via TICAM1. The protein is 5-azacytidine-induced protein 2 (AZI2) of Bos taurus (Bovine).